Reading from the N-terminus, the 488-residue chain is Bifunctional pantoate ligase/cytidylate kinase (488 aa).

1-8 (MGALHRAH) is an ATP binding site. The segment at 1-251 (MGALHRAHGQ…CGETRLIDHT (251 aa)) is pantoate--beta-alanine ligase. Residue His8 is the Proton donor of the active site. A (R)-pantoate-binding site is contributed by Gln36. Position 36 (Gln36) interacts with beta-alanine. Residue 125-128 (GEKD) participates in ATP binding. Gln131 is a (R)-pantoate binding site. Residues Val154 and 162–165 (CSSR) each bind ATP. Positions 252-488 (FLMSRQPIVA…PEEVWPTPGS (237 aa)) are cytidylate kinase.

The protein in the N-terminal section; belongs to the pantothenate synthetase family. It in the C-terminal section; belongs to the cytidylate kinase family. Type 1 subfamily.

It is found in the cytoplasm. It carries out the reaction (R)-pantoate + beta-alanine + ATP = (R)-pantothenate + AMP + diphosphate + H(+). It catalyses the reaction CMP + ATP = CDP + ADP. The catalysed reaction is dCMP + ATP = dCDP + ADP. The protein operates within cofactor biosynthesis; (R)-pantothenate biosynthesis; (R)-pantothenate from (R)-pantoate and beta-alanine: step 1/1. Functionally, catalyzes the condensation of pantoate with beta-alanine in an ATP-dependent reaction via a pantoyl-adenylate intermediate. In terms of biological role, catalyzes the transfer of a phosphate group from ATP to either CMP or dCMP to form CDP or dCDP and ADP, respectively. This is Bifunctional pantoate ligase/cytidylate kinase from Prochlorococcus marinus (strain MIT 9303).